We begin with the raw amino-acid sequence, 181 residues long: Trafficking protein particle complex subunit 3-like protein (181 aa).

The S-palmitoyl cysteine moiety is linked to residue Cys68.

The protein belongs to the TRAPP small subunits family. BET3 subfamily. In terms of assembly, homodimer. Component of the multisubunit TRAPP (transport protein particle) complex, which includes at least TRAPPC2, TRAPPC2L, TRAPPC3, TRAPPC3L, TRAPPC4, TRAPPC5, TRAPPC8, TRAPPC9, TRAPPC10, TRAPPC11 and TRAPPC12.

Its subcellular location is the golgi apparatus. It localises to the cis-Golgi network. It is found in the endoplasmic reticulum. Its function is as follows. May play a role in vesicular transport from endoplasmic reticulum to Golgi. In Mus musculus (Mouse), this protein is Trafficking protein particle complex subunit 3-like protein (Trappc3l).